The chain runs to 475 residues: MNTALAQQIANEGGVEAWMIAQQHKSLLRFLTCGSVDDGKSTLIGRLLHDTRQIYEDQLSSLHNDSKRHGTQGEKLDLALLVDGLQAEREQGITIDVAYRYFSTEKRKFIIADTPGHEQYTRNMATGASTCELAILLIDARKGVLDQTRRHSFISTLLGIKHLVVAINKMDLVDYSEETFTRIREDYLTFAGQLPGNLDIRFVPLSALEGDNVASQSESMPWYSGPTLLEVLETVEIQRVVDAQPMRFPVQYVNRPNLDFRGYAGTLASGRVEVGQRVKVLPSGVESNVARIVTFDGDREEAFAGEAITLVLTDEIDISRGDLLLAADEALPAVQSASVDVVWMAEQPLSPGQSYDIKIAGKKTRARVDGIRYQVDINNLTQREVENLPLNGIGLVDLTFDEPLVLDRYQQNPVTGGLIFIDRLSNVTVGAGMVHEPVSQATAAPSEFSAFELELNALVRRHFPHWGARDLLGDK.

The region spanning 25 to 239 (KSLLRFLTCG…EVLETVEIQR (215 aa)) is the tr-type G domain. The G1 stretch occupies residues 34–41 (GSVDDGKS). A GTP-binding site is contributed by 34 to 41 (GSVDDGKS). A G2 region spans residues 92–96 (GITID). The interval 113–116 (DTPG) is G3. Residues 113 to 117 (DTPGH) and 168 to 171 (NKMD) each bind GTP. Residues 168 to 171 (NKMD) form a G4 region. The tract at residues 206 to 208 (SAL) is G5.

Belongs to the TRAFAC class translation factor GTPase superfamily. Classic translation factor GTPase family. CysN/NodQ subfamily. As to quaternary structure, heterodimer composed of CysD, the smaller subunit, and CysN.

It carries out the reaction sulfate + ATP + H(+) = adenosine 5'-phosphosulfate + diphosphate. The protein operates within sulfur metabolism; hydrogen sulfide biosynthesis; sulfite from sulfate: step 1/3. Its function is as follows. With CysD forms the ATP sulfurylase (ATPS) that catalyzes the adenylation of sulfate producing adenosine 5'-phosphosulfate (APS) and diphosphate, the first enzymatic step in sulfur assimilation pathway. APS synthesis involves the formation of a high-energy phosphoric-sulfuric acid anhydride bond driven by GTP hydrolysis by CysN coupled to ATP hydrolysis by CysD. This is Sulfate adenylyltransferase subunit 1 from Shigella sonnei (strain Ss046).